Consider the following 178-residue polypeptide: Inner membrane-spanning protein YciB (178 aa).

5 helical membrane passes run 22 to 42 (IFWA…YSWY), 50 to 70 (MTLV…YFHN), 76 to 96 (WKVT…QWVM), 121 to 141 (IAWA…AFWL), and 149 to 169 (FKVF…GVYI).

This sequence belongs to the YciB family.

The protein localises to the cell inner membrane. Plays a role in cell envelope biogenesis, maintenance of cell envelope integrity and membrane homeostasis. This is Inner membrane-spanning protein YciB from Cronobacter sakazakii (strain ATCC BAA-894) (Enterobacter sakazakii).